The sequence spans 250 residues: Uridylate kinase (250 aa).

17 to 20 contacts ATP; sequence KLSG. Gly59 contributes to the UMP binding site. The ATP site is built by Gly60 and Arg64. UMP contacts are provided by residues Asp79 and 140–147; that span reads TGNPYFTT. Positions 167, 173, and 176 each coordinate ATP.

Belongs to the UMP kinase family. In terms of assembly, homohexamer.

Its subcellular location is the cytoplasm. The catalysed reaction is UMP + ATP = UDP + ADP. It participates in pyrimidine metabolism; CTP biosynthesis via de novo pathway; UDP from UMP (UMPK route): step 1/1. With respect to regulation, inhibited by UTP. Functionally, catalyzes the reversible phosphorylation of UMP to UDP. The polypeptide is Uridylate kinase (Myxococcus xanthus (strain DK1622)).